A 1009-amino-acid polypeptide reads, in one-letter code: Rho GTPase-activating protein gacT (1009 aa).

Disordered stretches follow at residues 1–72 (MKNI…SRNH) and 89–117 (TSHH…QQTQ). Residues 12–23 (FHKDKKEGDKQD) show a composition bias toward basic and acidic residues. A compositionally biased stretch (low complexity) spans 26–35 (GSSGSSGNSG). Positions 58–69 (ESYSGDNSPTLS) are enriched in polar residues. The segment covering 89–103 (TSHHSHSHNHNHNHN) has biased composition (basic residues). Residues 104–117 (HQLTQPIQQQQQTQ) are compositionally biased toward low complexity. Residues 163 to 351 (VPLTQVPCRA…EVFPQHHLYY (189 aa)) form the Rho-GAP domain. Disordered stretches follow at residues 388–420 (TISG…DSTA), 432–482 (PEQQ…TFRV), and 508–571 (GPSG…TTDQ). Low complexity-rich tracts occupy residues 394–415 (PSNG…ITSP), 432–468 (PEQQ…QPIS), and 512–521 (TTGTTPNGGS). Residues 522-546 (LSIGGGNGGNGGSSLSVGSGGGNGG) are compositionally biased toward gly residues. Positions 547–557 (SSLSVGSNTSV) are enriched in low complexity. Residues 580–656 (AYTNNEDTKA…IEREIEKKRL (77 aa)) adopt a coiled-coil conformation. The tract at residues 686–713 (ISTIDGSGGSNRNSKNYGNGSSSSSNRR) is disordered. Residues 695-713 (SNRNSKNYGNGSSSSSNRR) show a composition bias toward low complexity. Residues 715-743 (SNTINQQLQMQLQQLQIQQQQYQQTQQSQ) adopt a coiled-coil conformation. Residues 759-781 (TTTTTTTSSGSNRFSSNRYKPVD) are disordered. Positions 766 to 781 (SSGSNRFSSNRYKPVD) are enriched in polar residues. The stretch at 839-952 (ENLVLLQQQY…IEEIHLLETY (114 aa)) forms a coiled coil. The tract at residues 965-1009 (STTKDLLTRSRSPTLPSSINMSTSSLGSSSSSAYNNNNNNNNVPK) is disordered. Polar residues predominate over residues 967 to 980 (TKDLLTRSRSPTLP). Positions 981 to 1009 (SSINMSTSSLGSSSSSAYNNNNNNNNVPK) are enriched in low complexity.

Its subcellular location is the cytoplasm. In terms of biological role, rho GTPase-activating protein involved in the signal transduction pathway. The polypeptide is Rho GTPase-activating protein gacT (gacT) (Dictyostelium discoideum (Social amoeba)).